The primary structure comprises 460 residues: Antizyme inhibitor 2 (460 aa).

The segment at 117–140 (QIAQIKYAAKHGIQLLSFDNEMEL) is necessary for polyamine uptake stimulation.

The protein belongs to the Orn/Lys/Arg decarboxylase class-II family. ODC antizyme inhibitor subfamily. In terms of assembly, monomer. Interacts with OAZ1, OAZ2 and OAZ3; this interaction disrupts the interaction between the antizyme and ODC1. Does not form a heterodimer with ODC1. Post-translationally, ubiquitinated, leading to its proteasomal degradation; a process that is reduced in presence of antizymes. May also be degraded through the lysosomal degradative pathway in a proteasomal-independent manner. As to expression, expressed in the neocortex, thalamus, hippocampus, cerebellum, medulla oblongata, gray and white matter. Expressed in neurons, oligodendrocytes, basket, Purkinje and pyramidal cells. Expressed in spermatocytes and Leydig cells of the testis. Expressed in luteal theca cells lining corpus luteum cysts and in hilus cells of the ovary. Expressed in primary and neoplastic mast cells (MC) (at protein level). Highly expressed in brain. Also expressed in testis.

Its subcellular location is the nucleus. It is found in the cytoplasm. The protein localises to the perinuclear region. It localises to the membrane. The protein resides in the cytoplasmic vesicle. Its subcellular location is the endoplasmic reticulum-Golgi intermediate compartment. It is found in the golgi apparatus. The protein localises to the cis-Golgi network. It localises to the trans-Golgi network. The protein resides in the cytoplasmic granule. Its subcellular location is the cell projection. It is found in the axon. The protein localises to the dendrite. It localises to the perikaryon. Antizyme inhibitor (AZI) protein that positively regulates ornithine decarboxylase (ODC) activity and polyamine uptake. AZI is an enzymatically inactive ODC homolog that counteracts the negative effect of ODC antizymes (AZs) OAZ1, OAZ2 and OAZ3 on ODC activity by competing with ODC for antizyme-binding. Inhibits antizyme-dependent ODC degradation and releases ODC monomers from their inactive complex with antizymes, leading to formation of the catalytically active ODC homodimer and restoring polyamine production. Participates in the morphological integrity of the trans-Golgi network (TGN) and functions as a regulator of intracellular secretory vesicle trafficking. In Homo sapiens (Human), this protein is Antizyme inhibitor 2 (AZIN2).